The following is a 448-amino-acid chain: ATP-dependent protease ATPase subunit HslU (448 aa).

ATP-binding positions include Ile-23, Gly-65–Glu-70, Asp-263, Glu-327, and Arg-399.

Belongs to the ClpX chaperone family. HslU subfamily. As to quaternary structure, a double ring-shaped homohexamer of HslV is capped on each side by a ring-shaped HslU homohexamer. The assembly of the HslU/HslV complex is dependent on binding of ATP.

The protein resides in the cytoplasm. Functionally, ATPase subunit of a proteasome-like degradation complex; this subunit has chaperone activity. The binding of ATP and its subsequent hydrolysis by HslU are essential for unfolding of protein substrates subsequently hydrolyzed by HslV. HslU recognizes the N-terminal part of its protein substrates and unfolds these before they are guided to HslV for hydrolysis. The protein is ATP-dependent protease ATPase subunit HslU of Borreliella burgdorferi (strain ATCC 35210 / DSM 4680 / CIP 102532 / B31) (Borrelia burgdorferi).